The chain runs to 251 residues: Hydroxyacylglutathione hydrolase (251 aa).

Zn(2+) contacts are provided by His-53, His-55, Asp-57, His-58, His-110, Asp-127, and His-165.

The protein belongs to the metallo-beta-lactamase superfamily. Glyoxalase II family. Monomer. Requires Zn(2+) as cofactor.

It catalyses the reaction an S-(2-hydroxyacyl)glutathione + H2O = a 2-hydroxy carboxylate + glutathione + H(+). The protein operates within secondary metabolite metabolism; methylglyoxal degradation; (R)-lactate from methylglyoxal: step 2/2. Thiolesterase that catalyzes the hydrolysis of S-D-lactoyl-glutathione to form glutathione and D-lactic acid. The chain is Hydroxyacylglutathione hydrolase from Salmonella gallinarum (strain 287/91 / NCTC 13346).